A 479-amino-acid polypeptide reads, in one-letter code: Glutamyl-tRNA(Gln) amidotransferase subunit A (479 aa).

Residues lysine 75 and serine 150 each act as charge relay system in the active site. Serine 174 (acyl-ester intermediate) is an active-site residue.

The protein belongs to the amidase family. GatA subfamily. As to quaternary structure, heterotrimer of A, B and C subunits.

The catalysed reaction is L-glutamyl-tRNA(Gln) + L-glutamine + ATP + H2O = L-glutaminyl-tRNA(Gln) + L-glutamate + ADP + phosphate + H(+). In terms of biological role, allows the formation of correctly charged Gln-tRNA(Gln) through the transamidation of misacylated Glu-tRNA(Gln) in organisms which lack glutaminyl-tRNA synthetase. The reaction takes place in the presence of glutamine and ATP through an activated gamma-phospho-Glu-tRNA(Gln). The protein is Glutamyl-tRNA(Gln) amidotransferase subunit A of Synechococcus elongatus (strain ATCC 33912 / PCC 7942 / FACHB-805) (Anacystis nidulans R2).